The primary structure comprises 190 residues: Imidazoleglycerol-phosphate dehydratase (190 aa).

This sequence belongs to the imidazoleglycerol-phosphate dehydratase family.

Its subcellular location is the cytoplasm. It carries out the reaction D-erythro-1-(imidazol-4-yl)glycerol 3-phosphate = 3-(imidazol-4-yl)-2-oxopropyl phosphate + H2O. It participates in amino-acid biosynthesis; L-histidine biosynthesis; L-histidine from 5-phospho-alpha-D-ribose 1-diphosphate: step 6/9. In Campylobacter hominis (strain ATCC BAA-381 / DSM 21671 / CCUG 45161 / LMG 19568 / NCTC 13146 / CH001A), this protein is Imidazoleglycerol-phosphate dehydratase.